Consider the following 400-residue polypeptide: MIIKPRVRGFICVTTHPVGCEANVKEQIDYVTSHGPIANGPKKVLVIGASTGYGLAARISAAFGSGADTLGVFFERAGSETKPGTAGWYNSAAFEKFATEKGLYARSINGDAFSDKVKQVTIDTIKQDLGKVDLVVYSLAAPRRTHPKTGETISSTLKPVGKAVTFRGLDTDKEVIREVSLEPATQEEIDGTVAVMGGEDWQMWIDALADAGVLADGAKTTAFTYLGEQITHDIYWNGSIGEAKKDLDKKVLSIRDKLAAHGGDARVSVLKAVVTQASSAIPMMPLYLSLLFKVMKEKGTHEGCIEQVYGLLKDSLYGATPHVDEEGRLRADYKELDPQVQNQVVAMWDKVTNENLYEMTDFAGYKTEFLRLFGFEIAGVDYDADVNPDVKIPGIIDTTV.

NAD(+) is bound by residues 48 to 53 (GASTGY), 74 to 75 (FE), 111 to 112 (DA), and 139 to 140 (LA). Tyrosine 225 serves as a coordination point for substrate. Tyrosine 235 serves as the catalytic Proton donor. Residues lysine 244 and 273-275 (VVT) each bind NAD(+).

The protein belongs to the TER reductase family. As to quaternary structure, monomer.

The enzyme catalyses a 2,3-saturated acyl-[ACP] + NAD(+) = a (2E)-enoyl-[ACP] + NADH + H(+). It functions in the pathway lipid metabolism; fatty acid biosynthesis. In terms of biological role, involved in the final reduction of the elongation cycle of fatty acid synthesis (FAS II). Catalyzes the reduction of a carbon-carbon double bond in an enoyl moiety that is covalently linked to an acyl carrier protein (ACP). This chain is Enoyl-[acyl-carrier-protein] reductase [NADH], found in Burkholderia cenocepacia (strain ATCC BAA-245 / DSM 16553 / LMG 16656 / NCTC 13227 / J2315 / CF5610) (Burkholderia cepacia (strain J2315)).